The following is a 206-amino-acid chain: uncharacterized protein (206 aa).

Transmembrane regions (helical) follow at residues 9–29, 47–67, 74–94, and 150–170; these read ILSL…SVLT, LGVV…LAFL, FFVI…INTI, and IAVI…FYAF.

Belongs to the Rht family.

The protein resides in the cell membrane. This is an uncharacterized protein from Synechocystis sp. (strain ATCC 27184 / PCC 6803 / Kazusa).